A 265-amino-acid chain; its full sequence is Apolipoprotein A-I (265 aa).

Residues 1–16 (MKAAVLIWLFLMGSQA) form the signal peptide. A run of 2 repeats spans residues 66–87 (LKLL…EQLG) and 88–109 (PVTQ…QEMS). A 10 X approximate tandem repeats region spans residues 66–265 (LKLLDNWDSL…EEYTKKLSSQ (200 aa)). Position 108 is a methionine sulfoxide (M108). The 3; half-length repeat unit spans residues 110–120 (KDLEEVKAQVQ). 5 consecutive repeat copies span residues 121–142 (PYLD…QKLE), 143–164 (PLRT…EKLS), 165–186 (PLAE…TQLA), 187–208 (PYSD…ENSG), and 209–230 (ASLA…EKAK). Residue M134 is modified to Methionine sulfoxide. One copy of the 9; half-length repeat lies at 231–241 (PALDDLRQGLL). Residues 242–265 (PVLESFKVSFLSALEEYTKKLSSQ) form repeat 10.

Belongs to the apolipoprotein A1/A4/E family. As to quaternary structure, homodimer. Interacts with APOA1BP and CLU. Component of a sperm activating protein complex (SPAP), consisting of APOA1, an immunoglobulin heavy chain, an immunoglobulin light chain and albumin. Interacts with NDRG1. Interacts with SCGB3A2. Interacts with NAXE and YJEFN3. Post-translationally, glycosylated. In terms of processing, palmitoylated. Phosphorylation sites are present in the extracellular medium.

The protein resides in the secreted. Functionally, participates in the reverse transport of cholesterol from tissues to the liver for excretion by promoting cholesterol efflux from tissues and by acting as a cofactor for the lecithin cholesterol acyltransferase (LCAT). As part of the SPAP complex, activates spermatozoa motility. The protein is Apolipoprotein A-I (APOA1) of Aotus nancymaae (Ma's night monkey).